Reading from the N-terminus, the 207-residue chain is Thymidylate kinase (207 aa).

A disordered region spans residues 11-49 (EGIDGSGKSTQARRLAEHLRDTGRDPLLTREPGGSPGAE). An ATP-binding site is contributed by 12–19 (GIDGSGKS). The span at 24 to 38 (RLAEHLRDTGRDPLL) shows a compositional bias: basic and acidic residues.

It belongs to the thymidylate kinase family.

It carries out the reaction dTMP + ATP = dTDP + ADP. Phosphorylation of dTMP to form dTDP in both de novo and salvage pathways of dTTP synthesis. The protein is Thymidylate kinase of Dinoroseobacter shibae (strain DSM 16493 / NCIMB 14021 / DFL 12).